The chain runs to 335 residues: Nucleoid-associated protein YejK (335 aa).

It belongs to the YejK family.

Its subcellular location is the cytoplasm. It localises to the nucleoid. This chain is Nucleoid-associated protein YejK, found in Salmonella enteritidis PT4 (strain P125109).